Here is a 226-residue protein sequence, read N- to C-terminus: HTH-type transcriptional regulator TcmR (226 aa).

Over residues 1–16 (MDSAETDTPSTRSTPN) the composition is skewed to polar residues. Residues 1 to 25 (MDSAETDTPSTRSTPNGPGLRQRKL) form a disordered region. An HTH tetR-type domain is found at 26–86 (RRTRDQLIRE…TPISAIDEAF (61 aa)). A DNA-binding region (H-T-H motif) is located at residues 49–68 (TVEQIAEAVEVHPRTFFRHF).

It participates in antibiotic biosynthesis; tetracenomycin C biosynthesis. Its function is as follows. Represses transcription of the divergently oriented tcmR and tcmA (tetracenomycin C resistance and export) genes by binding to an intergenic operator region. This binding is inhibited by tetracenomycin C. This is HTH-type transcriptional regulator TcmR (tcmR) from Streptomyces glaucescens.